The primary structure comprises 345 residues: Phosphoribosylformylglycinamidine cyclo-ligase (345 aa).

Belongs to the AIR synthase family.

The protein resides in the cytoplasm. The catalysed reaction is 2-formamido-N(1)-(5-O-phospho-beta-D-ribosyl)acetamidine + ATP = 5-amino-1-(5-phospho-beta-D-ribosyl)imidazole + ADP + phosphate + H(+). It participates in purine metabolism; IMP biosynthesis via de novo pathway; 5-amino-1-(5-phospho-D-ribosyl)imidazole from N(2)-formyl-N(1)-(5-phospho-D-ribosyl)glycinamide: step 2/2. This is Phosphoribosylformylglycinamidine cyclo-ligase from Bifidobacterium longum (strain DJO10A).